Reading from the N-terminus, the 250-residue chain is Shieldin complex subunit 3 (250 aa).

The tract at residues 28-83 (QDFPTRPLSRFIPWFPYDGSKLPLRPKRSPPVISEEAAEDVKQYLTISEHDAKSHS) is sufficient for interaction with MAD2L2. Residues 108 to 119 (LKEQTNSGNLGK) are compositionally biased toward polar residues. Residues 108–129 (LKEQTNSGNLGKQSEKGKQHKR) form a disordered region.

In terms of assembly, component of the shieldin complex, consisting of SHLD1, SHLD2, SHLD3 and MAD2L2/REV7. Within the complex, SHLD2 forms a scaffold which interacts with a SHLD3-MAD2L2 subcomplex via its N-terminus, and with SHLD1 via its C-terminus. Interacts with ASTE1.

It is found in the chromosome. In terms of biological role, component of the shieldin complex, which plays an important role in repair of DNA double-stranded breaks (DSBs). During G1 and S phase of the cell cycle, the complex functions downstream of TP53BP1 to promote non-homologous end joining (NHEJ) and suppress DNA end resection. Mediates various NHEJ-dependent processes including immunoglobulin class-switch recombination, and fusion of unprotected telomeres. The sequence is that of Shieldin complex subunit 3 from Homo sapiens (Human).